The sequence spans 309 residues: Porphobilinogen deaminase (309 aa).

At cysteine 241 the chain carries S-(dipyrrolylmethanemethyl)cysteine.

The protein belongs to the HMBS family. Monomer. Dipyrromethane is required as a cofactor.

It catalyses the reaction 4 porphobilinogen + H2O = hydroxymethylbilane + 4 NH4(+). It participates in porphyrin-containing compound metabolism; protoporphyrin-IX biosynthesis; coproporphyrinogen-III from 5-aminolevulinate: step 2/4. In terms of biological role, tetrapolymerization of the monopyrrole PBG into the hydroxymethylbilane pre-uroporphyrinogen in several discrete steps. This chain is Porphobilinogen deaminase, found in Bacillus cereus (strain ATCC 10987 / NRS 248).